We begin with the raw amino-acid sequence, 361 residues long: Chorismate synthase (361 aa).

The NADP(+) site is built by Arg-48 and Arg-54. FMN-binding positions include 125-127 (RSS), 238-239 (NA), Gly-278, 293-297 (KPTSS), and Arg-319.

Belongs to the chorismate synthase family. As to quaternary structure, homotetramer. FMNH2 serves as cofactor.

It catalyses the reaction 5-O-(1-carboxyvinyl)-3-phosphoshikimate = chorismate + phosphate. It participates in metabolic intermediate biosynthesis; chorismate biosynthesis; chorismate from D-erythrose 4-phosphate and phosphoenolpyruvate: step 7/7. In terms of biological role, catalyzes the anti-1,4-elimination of the C-3 phosphate and the C-6 proR hydrogen from 5-enolpyruvylshikimate-3-phosphate (EPSP) to yield chorismate, which is the branch point compound that serves as the starting substrate for the three terminal pathways of aromatic amino acid biosynthesis. This reaction introduces a second double bond into the aromatic ring system. The chain is Chorismate synthase from Klebsiella pneumoniae subsp. pneumoniae (strain ATCC 700721 / MGH 78578).